Reading from the N-terminus, the 801-residue chain is Zinc finger Y-chromosomal protein (801 aa).

The residue at position 270 (S270) is a Phosphoserine. The C2H2-type 1 zinc-finger motif lies at Y421–H443. The C2H2-type 2; atypical zinc-finger motif lies at Y452–H474. 11 consecutive C2H2-type zinc fingers follow at residues I484–H506, H515–H538, H544–H566, Y572–H595, F601–H623, H629–H652, H658–H680, H686–H709, F715–H737, Y743–H766, and H772–H795.

This sequence belongs to the krueppel C2H2-type zinc-finger protein family. ZFX/ZFY subfamily.

The protein localises to the nucleus. Functionally, probable transcriptional activator. Binds to the consensus sequence 5'-AGGCCY-3'. This chain is Zinc finger Y-chromosomal protein (ZFY), found in Homo sapiens (Human).